A 384-amino-acid polypeptide reads, in one-letter code: 8-amino-7-oxononanoate synthase (384 aa).

A substrate-binding site is contributed by R21. 108–109 is a binding site for pyridoxal 5'-phosphate; the sequence is GF. Position 133 (H133) interacts with substrate. Pyridoxal 5'-phosphate is bound by residues S179, H207, and T233. The residue at position 236 (K236) is an N6-(pyridoxal phosphate)lysine. T352 provides a ligand contact to substrate.

The protein belongs to the class-II pyridoxal-phosphate-dependent aminotransferase family. BioF subfamily. Homodimer. Pyridoxal 5'-phosphate is required as a cofactor.

It carries out the reaction 6-carboxyhexanoyl-[ACP] + L-alanine + H(+) = (8S)-8-amino-7-oxononanoate + holo-[ACP] + CO2. It functions in the pathway cofactor biosynthesis; biotin biosynthesis. Its function is as follows. Catalyzes the decarboxylative condensation of pimeloyl-[acyl-carrier protein] and L-alanine to produce 8-amino-7-oxononanoate (AON), [acyl-carrier protein], and carbon dioxide. This is 8-amino-7-oxononanoate synthase from Escherichia coli O157:H7.